Consider the following 163-residue polypeptide: Nucleotide-binding protein BSU11020 (163 aa).

It belongs to the YajQ family.

Nucleotide-binding protein. The polypeptide is Nucleotide-binding protein BSU11020 (yitK) (Bacillus subtilis (strain 168)).